Here is a 230-residue protein sequence, read N- to C-terminus: MYDIKKWRHIFKLDPAKHISDDDLDAICMSQTDAIMIGGTDDVTEDNVIHLMSRVRRYPLPLVLEISNIESVMPGFDFYFVPTVLNSTDVVFHNGTLLEALKTYGHSIDFEEVIFEGYVVCNADSKVAKHTKANTDLTTEDLEAYAQMVNHMYRLPVMYIEYSGIYGDVSKVQAVSEHLTETQLFYGGGISSEQQATEMAAIADTIIVGDIIYKDIKKALKTVKIKESSK.

K12 lines the sn-glycerol 1-phosphate pocket. Positions 14 and 40 each coordinate Mg(2+). Residues 159–164 (YIEYSG), G189, and 209–210 (GD) contribute to the sn-glycerol 1-phosphate site.

This sequence belongs to the GGGP/HepGP synthase family. Group I subfamily. As to quaternary structure, homodimer. It depends on Mg(2+) as a cofactor.

The enzyme catalyses sn-glycerol 1-phosphate + all-trans-heptaprenyl diphosphate = 3-heptaprenyl-sn-glycero-1-phosphate + diphosphate. It functions in the pathway membrane lipid metabolism; glycerophospholipid metabolism. In terms of biological role, prenyltransferase that catalyzes in vivo the transfer of the heptaprenyl moiety of heptaprenyl pyrophosphate (HepPP; 35 carbon atoms) to the C3 hydroxyl of sn-glycerol-1-phosphate (G1P), producing heptaprenylglyceryl phosphate (HepGP). This reaction is an ether-bond-formation step in the biosynthesis of archaea-type G1P-based membrane lipids found in Bacillales. To a much lesser extent, is also able to use geranylgeranyl diphosphate (GGPP; C20) as the prenyl donor. This chain is Heptaprenylglyceryl phosphate synthase, found in Staphylococcus aureus (strain NCTC 8325 / PS 47).